Reading from the N-terminus, the 349-residue chain is Putative F-box/kelch-repeat protein At4g02310 (349 aa).

Residues 11-58 (SLFSLLPNDIVLNILARVPRWYHPILSCVSKNLRFLVSSSELKITRSL) enclose the F-box domain. One copy of the Kelch repeat lies at 154–204 (KIYVFGGIDDMNKRYYEGIHAQVFDLKTQTWHVGPNLSVKLACLNRSVVTP).

This is Putative F-box/kelch-repeat protein At4g02310 from Arabidopsis thaliana (Mouse-ear cress).